Consider the following 92-residue polypeptide: Cell division protein FtsB (92 aa).

Topologically, residues 1 to 3 are cytoplasmic; sequence MRL. Residues 4–21 form a helical membrane-spanning segment; the sequence is FIFLLVAVLLLFQYDFWF. The Periplasmic portion of the chain corresponds to 22 to 92; the sequence is GKNGYLDYKR…IFYHIVKEQK (71 aa). A coiled-coil region spans residues 26-74; that stretch reads YLDYKRTAQQIAQHKQENEKLSQRNQVVAAEIKDLKQGVEAIEERARFQ.

This sequence belongs to the FtsB family. As to quaternary structure, part of a complex composed of FtsB, FtsL and FtsQ.

It is found in the cell inner membrane. Its function is as follows. Essential cell division protein. May link together the upstream cell division proteins, which are predominantly cytoplasmic, with the downstream cell division proteins, which are predominantly periplasmic. The protein is Cell division protein FtsB of Pasteurella multocida (strain Pm70).